The chain runs to 100 residues: Ribosomal processing cysteine protease Prp (100 aa).

His-16 acts as the Proton donor in catalysis. Cys-28 serves as the catalytic Nucleophile.

The protein belongs to the Prp family. In terms of assembly, homodimer.

In terms of biological role, an essential cysteine protease that cleaves the N-terminus from ribosomal protein bL27. In Mycoplasma pneumoniae (strain ATCC 29342 / M129 / Subtype 1) (Mycoplasmoides pneumoniae), this protein is Ribosomal processing cysteine protease Prp.